The chain runs to 506 residues: AAA-ATPase At4g25835 (506 aa).

A signal peptide spans 1-20; it reads MKEYWTSLASLLGVLAFCQS. Residue 244 to 251 participates in ATP binding; that stretch reads GPPGTGKS. Positions 462–506 are disordered; sequence GKSRVQNVSLEEQENRAFDSLYAEENGGEEEEIEDNICKSSDDCS. Over residues 487 to 496 the composition is skewed to acidic residues; the sequence is NGGEEEEIED. Residues 497 to 506 show a composition bias toward basic and acidic residues; the sequence is NICKSSDDCS.

This sequence belongs to the AAA ATPase family. BCS1 subfamily. Requires Mg(2+) as cofactor.

It carries out the reaction ATP + H2O = ADP + phosphate + H(+). The chain is AAA-ATPase At4g25835 from Arabidopsis thaliana (Mouse-ear cress).